Reading from the N-terminus, the 253-residue chain is MADETTMRAGRGPGRACGRVSGVRILVVEDEPKMTALLARALTEEGHTVDTVADGRHAVAAVDGGDYDAVVLDVMLPGIDGFEVCARLRRQRVWTPVLMLTARGAVTDRIAGLDGGADDYLTKPFNLDELFARLRALSRRGPIPRPPTLEAGDLRLDPSEHRVWRADTEIRLSHKEFTLLEALIRRPGIVHTRAQLLERCWDAAYEARSNIVDVYIRYLRDKIDRPFGVTSLETIRGAGYRLRKDGGRHALPR.

In terms of domain architecture, Response regulatory spans 24–138 (RILVVEDEPK…ELFARLRALS (115 aa)). Aspartate 73 is modified (4-aspartylphosphate). The segment at residues 146 to 244 (PPTLEAGDLR…IRGAGYRLRK (99 aa)) is a DNA-binding region (ompR/PhoB-type).

As to quaternary structure, interacts with HK2. Phosphorylated by HK2.

The protein resides in the cytoplasm. Member of the three-protein two-component system HK1/HK2/TcrA. The chain is Transcriptional regulatory protein TcrA (tcrA) from Mycobacterium tuberculosis (strain ATCC 25618 / H37Rv).